The sequence spans 101 residues: Class II hydrophobin 5 (101 aa).

The signal sequence occupies residues 1 to 15; it reads MQLTALLALATLAIA. Cystine bridges form between C33–C83, C44–C74, C45–C57, and C84–C95.

This sequence belongs to the cerato-ulmin hydrophobin family. As to quaternary structure, homodimer. Homodimers further self-assemble to form highly ordered films at water-air interfaces through intermolecular interactions.

It localises to the secreted. The protein localises to the cell wall. Aerial growth, conidiation, and dispersal of filamentous fungi in the environment rely upon a capability of their secreting small amphipathic proteins called hydrophobins (HPBs) with low sequence identity. Class I can self-assemble into an outermost layer of rodlet bundles on aerial cell surfaces, conferring cellular hydrophobicity that supports fungal growth, development and dispersal; whereas Class II form highly ordered films at water-air interfaces through intermolecular interactions but contribute nothing to the rodlet structure. This chain is Class II hydrophobin 5, found in Trichoderma asperellum (strain ATCC 204424 / CBS 433.97 / NBRC 101777).